The sequence spans 125 residues: Monothiol glutaredoxin-S2 (125 aa).

One can recognise a Glutaredoxin domain in the interval 28 to 124; the sequence is AERVGRLVRE…PRLREVGALC (97 aa). Cysteine 48 contributes to the [2Fe-2S] cluster binding site.

It belongs to the glutaredoxin family. CC-type subfamily.

It is found in the cytoplasm. In terms of biological role, may only reduce GSH-thiol disulfides, but not protein disulfides. The chain is Monothiol glutaredoxin-S2 (GRXS2) from Oryza sativa subsp. japonica (Rice).